Consider the following 422-residue polypeptide: Methylaspartate ammonia-lyase (422 aa).

Q175 serves as a coordination point for (2S,3S)-3-methyl-L-aspartate. Mg(2+) contacts are provided by D239, E276, and D310. Q332 is a binding site for (2S,3S)-3-methyl-L-aspartate. The active-site Proton acceptor is the K334. Position 363–364 (363–364 (TC)) interacts with (2S,3S)-3-methyl-L-aspartate.

The protein belongs to the methylaspartate ammonia-lyase family. Homodimer. Mg(2+) serves as cofactor.

It catalyses the reaction (2S,3S)-3-methyl-L-aspartate = mesaconate + NH4(+). Its pathway is amino-acid degradation; L-glutamate degradation via mesaconate pathway; acetate and pyruvate from L-glutamate: step 2/4. Its function is as follows. Involved in the methylaspartate cycle. Catalyzes the formation of the alpha,beta-unsaturated bond by the reversible anti elimination of ammonia from L-threo-beta-methylaspartate (L-threo-(2S,3S)-3-methylaspartate) to give mesaconate. The polypeptide is Methylaspartate ammonia-lyase (mal) (Haloarcula marismortui (strain ATCC 43049 / DSM 3752 / JCM 8966 / VKM B-1809) (Halobacterium marismortui)).